The following is a 662-amino-acid chain: Glycogen debranching enzyme (662 aa).

Residue aspartate 338 is the Nucleophile of the active site. The Proton donor role is filled by glutamate 373.

It belongs to the glycosyl hydrolase 13 family.

The catalysed reaction is Hydrolysis of (1-&gt;6)-alpha-D-glucosidic linkages to branches with degrees of polymerization of three or four glucose residues in limit dextrin.. It functions in the pathway glycan degradation; glycogen degradation. Its function is as follows. Removes maltotriose and maltotetraose chains that are attached by 1,6-alpha-linkage to the limit dextrin main chain, generating a debranched limit dextrin. This chain is Glycogen debranching enzyme, found in Yersinia pseudotuberculosis serotype O:1b (strain IP 31758).